Here is a 99-residue protein sequence, read N- to C-terminus: Aspartyl/glutamyl-tRNA(Asn/Gln) amidotransferase subunit C (99 aa).

This sequence belongs to the GatC family. In terms of assembly, heterotrimer of A, B and C subunits.

The catalysed reaction is L-glutamyl-tRNA(Gln) + L-glutamine + ATP + H2O = L-glutaminyl-tRNA(Gln) + L-glutamate + ADP + phosphate + H(+). The enzyme catalyses L-aspartyl-tRNA(Asn) + L-glutamine + ATP + H2O = L-asparaginyl-tRNA(Asn) + L-glutamate + ADP + phosphate + 2 H(+). Its function is as follows. Allows the formation of correctly charged Asn-tRNA(Asn) or Gln-tRNA(Gln) through the transamidation of misacylated Asp-tRNA(Asn) or Glu-tRNA(Gln) in organisms which lack either or both of asparaginyl-tRNA or glutaminyl-tRNA synthetases. The reaction takes place in the presence of glutamine and ATP through an activated phospho-Asp-tRNA(Asn) or phospho-Glu-tRNA(Gln). The protein is Aspartyl/glutamyl-tRNA(Asn/Gln) amidotransferase subunit C of Orientia tsutsugamushi (strain Ikeda) (Rickettsia tsutsugamushi).